Reading from the N-terminus, the 172-residue chain is Protein GrpE (172 aa).

Residues 1–11 are compositionally biased toward low complexity; that stretch reads MSEENNSQNSN. The disordered stretch occupies residues 1–22; the sequence is MSEENNSQNSNPPNPENGEIAS.

The protein belongs to the GrpE family. In terms of assembly, homodimer.

The protein localises to the cytoplasm. Functionally, participates actively in the response to hyperosmotic and heat shock by preventing the aggregation of stress-denatured proteins, in association with DnaK and GrpE. It is the nucleotide exchange factor for DnaK and may function as a thermosensor. Unfolded proteins bind initially to DnaJ; upon interaction with the DnaJ-bound protein, DnaK hydrolyzes its bound ATP, resulting in the formation of a stable complex. GrpE releases ADP from DnaK; ATP binding to DnaK triggers the release of the substrate protein, thus completing the reaction cycle. Several rounds of ATP-dependent interactions between DnaJ, DnaK and GrpE are required for fully efficient folding. This Bdellovibrio bacteriovorus (strain ATCC 15356 / DSM 50701 / NCIMB 9529 / HD100) protein is Protein GrpE.